The sequence spans 85 residues: Large ribosomal subunit protein bL27 (85 aa).

The protein belongs to the bacterial ribosomal protein bL27 family.

The chain is Large ribosomal subunit protein bL27 from Vesicomyosocius okutanii subsp. Calyptogena okutanii (strain HA).